We begin with the raw amino-acid sequence, 89 residues long: Large ribosomal subunit protein bL27 (89 aa).

A disordered region spans residues 1–22 (MAHKKAGGSSRNGRDSESKRLG).

The protein belongs to the bacterial ribosomal protein bL27 family.

The sequence is that of Large ribosomal subunit protein bL27 from Brucella abortus (strain S19).